We begin with the raw amino-acid sequence, 770 residues long: Kinesin-like protein klpA (770 aa).

The tract at residues Met-1–Gln-152 is disordered. The span at Ser-85–Ser-105 shows a compositional bias: low complexity. The span at Thr-106 to Arg-119 shows a compositional bias: polar residues. Positions Thr-134–Gln-152 are enriched in basic and acidic residues. Residues Gln-175 to Phe-425 are a coiled coil. The 336-residue stretch at Asn-421–Thr-756 folds into the Kinesin motor domain. Residue Gly-514 to Thr-521 coordinates ATP.

This sequence belongs to the TRAFAC class myosin-kinesin ATPase superfamily. Kinesin family. NCD subfamily.

The protein resides in the cytoplasm. The protein localises to the cytoskeleton. In Emericella nidulans (strain FGSC A4 / ATCC 38163 / CBS 112.46 / NRRL 194 / M139) (Aspergillus nidulans), this protein is Kinesin-like protein klpA (klpA).